The primary structure comprises 160 residues: SsrA-binding protein (160 aa).

Residues 131 to 160 form a disordered region; the sequence is KKEYDKRDTERERDAGRELQRAVRNKGKED.

The protein belongs to the SmpB family.

It is found in the cytoplasm. Required for rescue of stalled ribosomes mediated by trans-translation. Binds to transfer-messenger RNA (tmRNA), required for stable association of tmRNA with ribosomes. tmRNA and SmpB together mimic tRNA shape, replacing the anticodon stem-loop with SmpB. tmRNA is encoded by the ssrA gene; the 2 termini fold to resemble tRNA(Ala) and it encodes a 'tag peptide', a short internal open reading frame. During trans-translation Ala-aminoacylated tmRNA acts like a tRNA, entering the A-site of stalled ribosomes, displacing the stalled mRNA. The ribosome then switches to translate the ORF on the tmRNA; the nascent peptide is terminated with the 'tag peptide' encoded by the tmRNA and targeted for degradation. The ribosome is freed to recommence translation, which seems to be the essential function of trans-translation. The chain is SsrA-binding protein from Pseudomonas fluorescens (strain Pf0-1).